Consider the following 162-residue polypeptide: MDNLNINFINDDEHPIPSQDLLLKCLQLVADKHHISHAEVNLNIVSNDEIQQINKQFRNKDKPTNIISFEFEKPQGLPDDIANDFLGDIVIAPAVLENEAKEQNKEINDHWQHIFIHGLLHLLGYDHQDDQEAEVMENLEIQLLAQLGIANPYIEQENQNGR.

The Zn(2+) site is built by H117, H121, and H127.

It belongs to the endoribonuclease YbeY family. Zn(2+) serves as cofactor.

The protein resides in the cytoplasm. Single strand-specific metallo-endoribonuclease involved in late-stage 70S ribosome quality control and in maturation of the 3' terminus of the 16S rRNA. The sequence is that of Endoribonuclease YbeY from Francisella tularensis subsp. holarctica (strain OSU18).